A 75-amino-acid polypeptide reads, in one-letter code: uncharacterized protein (75 aa).

The first 26 residues, 1 to 26 (MQFLERHFSVLFPVLFFFSFYPISFA), serve as a signal peptide directing secretion.

Its subcellular location is the secreted. This is an uncharacterized protein from Schizosaccharomyces pombe (strain 972 / ATCC 24843) (Fission yeast).